We begin with the raw amino-acid sequence, 617 residues long: Dihydroxy-acid dehydratase (617 aa).

D82 lines the Mg(2+) pocket. C123 serves as a coordination point for [2Fe-2S] cluster. Mg(2+)-binding residues include D124 and K125. Residue K125 is modified to N6-carboxylysine. C197 is a binding site for [2Fe-2S] cluster. Position 497 (E497) interacts with Mg(2+). S523 acts as the Proton acceptor in catalysis.

This sequence belongs to the IlvD/Edd family. As to quaternary structure, homodimer. [2Fe-2S] cluster is required as a cofactor. The cofactor is Mg(2+).

The enzyme catalyses (2R)-2,3-dihydroxy-3-methylbutanoate = 3-methyl-2-oxobutanoate + H2O. It carries out the reaction (2R,3R)-2,3-dihydroxy-3-methylpentanoate = (S)-3-methyl-2-oxopentanoate + H2O. The protein operates within amino-acid biosynthesis; L-isoleucine biosynthesis; L-isoleucine from 2-oxobutanoate: step 3/4. It participates in amino-acid biosynthesis; L-valine biosynthesis; L-valine from pyruvate: step 3/4. Functionally, functions in the biosynthesis of branched-chain amino acids. Catalyzes the dehydration of (2R,3R)-2,3-dihydroxy-3-methylpentanoate (2,3-dihydroxy-3-methylvalerate) into 2-oxo-3-methylpentanoate (2-oxo-3-methylvalerate) and of (2R)-2,3-dihydroxy-3-methylbutanoate (2,3-dihydroxyisovalerate) into 2-oxo-3-methylbutanoate (2-oxoisovalerate), the penultimate precursor to L-isoleucine and L-valine, respectively. This Streptomyces avermitilis (strain ATCC 31267 / DSM 46492 / JCM 5070 / NBRC 14893 / NCIMB 12804 / NRRL 8165 / MA-4680) protein is Dihydroxy-acid dehydratase.